A 957-amino-acid polypeptide reads, in one-letter code: Leucine--tRNA ligase (957 aa).

Positions 70–81 match the 'HIGH' region motif; it reads PYPSGAGLHVGH. A 'KMSKS' region motif is present at residues 727–731; the sequence is KMGKS. K730 contributes to the ATP binding site.

This sequence belongs to the class-I aminoacyl-tRNA synthetase family.

It is found in the cytoplasm. It carries out the reaction tRNA(Leu) + L-leucine + ATP = L-leucyl-tRNA(Leu) + AMP + diphosphate. This chain is Leucine--tRNA ligase, found in Corynebacterium efficiens (strain DSM 44549 / YS-314 / AJ 12310 / JCM 11189 / NBRC 100395).